The primary structure comprises 432 residues: Adenylosuccinate synthetase (432 aa).

GTP-binding positions include 13–19 (GDEGKGK) and 41–43 (GHT). Aspartate 14 acts as the Proton acceptor in catalysis. Mg(2+) is bound by residues aspartate 14 and glycine 41. Residues 14 to 17 (DEGK), 39 to 42 (NAGH), threonine 130, arginine 144, glutamine 225, threonine 240, and arginine 304 each bind IMP. The active-site Proton donor is histidine 42. 300 to 306 (ATTGRSR) provides a ligand contact to substrate. Residues arginine 306, 332-334 (KLD), and 415-417 (STG) each bind GTP.

Belongs to the adenylosuccinate synthetase family. In terms of assembly, homodimer. Mg(2+) serves as cofactor.

The protein resides in the cytoplasm. It catalyses the reaction IMP + L-aspartate + GTP = N(6)-(1,2-dicarboxyethyl)-AMP + GDP + phosphate + 2 H(+). It functions in the pathway purine metabolism; AMP biosynthesis via de novo pathway; AMP from IMP: step 1/2. In terms of biological role, plays an important role in the de novo pathway of purine nucleotide biosynthesis. Catalyzes the first committed step in the biosynthesis of AMP from IMP. This chain is Adenylosuccinate synthetase, found in Yersinia pestis bv. Antiqua (strain Antiqua).